The primary structure comprises 346 residues: Methylthioribose-1-phosphate isomerase (346 aa).

Residues 46–48, R89, and Q196 each bind substrate; that span reads RGA. D237 acts as the Proton donor in catalysis. Position 247-248 (247-248) interacts with substrate; the sequence is NK.

Belongs to the eIF-2B alpha/beta/delta subunits family. MtnA subfamily.

It catalyses the reaction 5-(methylsulfanyl)-alpha-D-ribose 1-phosphate = 5-(methylsulfanyl)-D-ribulose 1-phosphate. It functions in the pathway amino-acid biosynthesis; L-methionine biosynthesis via salvage pathway; L-methionine from S-methyl-5-thio-alpha-D-ribose 1-phosphate: step 1/6. Catalyzes the interconversion of methylthioribose-1-phosphate (MTR-1-P) into methylthioribulose-1-phosphate (MTRu-1-P). The polypeptide is Methylthioribose-1-phosphate isomerase (Geobacter sp. (strain M21)).